The chain runs to 243 residues: Ribosomal RNA small subunit methyltransferase E 2 (243 aa).

It belongs to the RNA methyltransferase RsmE family.

It localises to the cytoplasm. It catalyses the reaction uridine(1498) in 16S rRNA + S-adenosyl-L-methionine = N(3)-methyluridine(1498) in 16S rRNA + S-adenosyl-L-homocysteine + H(+). Its function is as follows. Specifically methylates the N3 position of the uracil ring of uridine 1498 (m3U1498) in 16S rRNA. Acts on the fully assembled 30S ribosomal subunit. This Borreliella burgdorferi (strain ATCC 35210 / DSM 4680 / CIP 102532 / B31) (Borrelia burgdorferi) protein is Ribosomal RNA small subunit methyltransferase E 2 (rsmE2).